A 257-amino-acid polypeptide reads, in one-letter code: Acyl-[acyl-carrier-protein]--UDP-N-acetylglucosamine O-acyltransferase (257 aa).

The protein belongs to the transferase hexapeptide repeat family. LpxA subfamily. As to quaternary structure, homotrimer.

It localises to the cytoplasm. The enzyme catalyses a (3R)-hydroxyacyl-[ACP] + UDP-N-acetyl-alpha-D-glucosamine = a UDP-3-O-[(3R)-3-hydroxyacyl]-N-acetyl-alpha-D-glucosamine + holo-[ACP]. It functions in the pathway glycolipid biosynthesis; lipid IV(A) biosynthesis; lipid IV(A) from (3R)-3-hydroxytetradecanoyl-[acyl-carrier-protein] and UDP-N-acetyl-alpha-D-glucosamine: step 1/6. Its function is as follows. Involved in the biosynthesis of lipid A, a phosphorylated glycolipid that anchors the lipopolysaccharide to the outer membrane of the cell. This is Acyl-[acyl-carrier-protein]--UDP-N-acetylglucosamine O-acyltransferase from Anaeromyxobacter sp. (strain Fw109-5).